The sequence spans 494 residues: Ankyrin repeat domain-containing protein 33B (494 aa).

Positions 1 to 80 (MVLLAGTGPE…SAESVPEGVP (80 aa)) are disordered. Positions 30-42 (VEEDPADYEEFED) are enriched in acidic residues. ANK repeat units follow at residues 84–113 (PETATLLRAACANNVGLLRTLVRRGVSVEE), 120–150 (NGRTGLIVACYHGFVDTVVALAECPHVDVNW), 154–183 (EGNTALITAAQAGHAIITNYLLNYFPGLDL), 189–218 (FGFTALMKAAMQGRTDCIRALMLAGADVHA), and 223–255 (RGMSPQEWATYTGRVDAVRLMQRLLERPCPEQF). Residues 349–494 (RAARGPQAQE…RRTAPWKKRT (146 aa)) are disordered. The span at 371 to 382 (TGQEDADSREGS) shows a compositional bias: basic and acidic residues. Phosphoserine is present on S405. Composition is skewed to basic and acidic residues over residues 440-451 (RPARKGSTKDSG) and 459-487 (RYKEAKEEKRKAEEAEKKRQAEAQKERRT). Positions 459–488 (RYKEAKEEKRKAEEAEKKRQAEAQKERRTA) form a coiled coil.

The chain is Ankyrin repeat domain-containing protein 33B (ANKRD33B) from Homo sapiens (Human).